Consider the following 1836-residue polypeptide: U3 small nucleolar RNA-associated protein 10 (1836 aa).

Residues 245 to 283 form an HEAT 1 repeat; it reads EVVGFLLLPSKYETLRNIDVDTRLTAYSIIAVLASIIPI. Positions 453–473 are disordered; it reads SNSSVRDSDDVEFDAGEEDNN. Positions 461-473 are enriched in acidic residues; that stretch reads DDVEFDAGEEDNN. HEAT repeat units lie at residues 585–623 and 813–850; these read PLDL…TTTS and VENR…DQDL. A disordered region spans residues 863–883; that stretch reads QIPEQGPAKRRRRSSSSTKQA. 2 consecutive transmembrane segments (helical) span residues 998 to 1018 and 1085 to 1105; these read LLLV…HSVM and LFTY…LLFL. HEAT repeat units follow at residues 1333–1372, 1749–1787, and 1790–1828; these read ESVL…KFGA, ETLV…KMGE, and LTYL…NVLG.

The protein belongs to the HEATR1/UTP10 family. In terms of assembly, component of the ribosomal small subunit (SSU) processome.

The protein resides in the nucleus. It is found in the nucleolus. It localises to the membrane. Functionally, involved in nucleolar processing of pre-18S ribosomal RNA. Involved in ribosome biosynthesis. The sequence is that of U3 small nucleolar RNA-associated protein 10 from Scheffersomyces stipitis (strain ATCC 58785 / CBS 6054 / NBRC 10063 / NRRL Y-11545) (Yeast).